A 530-amino-acid polypeptide reads, in one-letter code: G2/mitotic-specific cyclin-B (530 aa).

Residues 76 to 152 (ARVDSHWKKQ…EPTLKREDSN (77 aa)) are disordered. The span at 121-144 (PTKTTVEPTKVTVKSSSSENVNEP) shows a compositional bias: low complexity. Ser137 bears the Phosphoserine mark.

The protein belongs to the cyclin family. Cyclin AB subfamily. Interacts with the protein kinase Cdk1 to form a serine/threonine kinase holoenzyme complex also known as maturation promoting factor (MPF). The cyclin subunit imparts substrate specificity to the complex.

In terms of biological role, essential for the control of the cell cycle at the G2/M (mitosis) transition. The polypeptide is G2/mitotic-specific cyclin-B (CycB) (Drosophila melanogaster (Fruit fly)).